A 731-amino-acid polypeptide reads, in one-letter code: Two pore channel protein 2 (731 aa).

At 1–68 the chain is on the cytoplasmic side; it reads MAAEEQPLLG…RWYYSNVCQR (68 aa). Residues 69–89 form a helical membrane-spanning segment; it reads VLGFIIFLILILAFVEVPSSF. Topologically, residues 90-111 are extracellular; the sequence is TKTADVRYRSQPWQPPCGLTET. A helical transmembrane segment spans residues 112 to 132; the sequence is IEAFCLLAFLVDLSVKGYLVG. Residues 133–139 are Cytoplasmic-facing; that stretch reads QAQLQQN. The helical transmembrane segment at 140–160 threads the bilayer; it reads LWLLAYFMVLVVSVVDWIVSL. Residues 161 to 167 lie on the Extracellular side of the membrane; it reads SLACEEP. A helical transmembrane segment spans residues 168–188; it reads LRMRRLLRPFFLLQNSSMMKK. Residues 187–191 are interaction with phosphatidylinositol 3,5-bisphosphate; that stretch reads KKTLK. Residues 189–203 are Cytoplasmic-facing; that stretch reads TLKCIRWSLPEMASV. A helical transmembrane segment spans residues 204–224; that stretch reads GLLLAIHLCLFTIIGMLLFTI. The Extracellular segment spans residues 225–238; that stretch reads GEKDEAQDQERLAY. Positions 239 to 263 form an intramembrane region, helical; Pore-forming; the sequence is FRNLPEALTSLLVLLTTSNNPDVMI. Over 264–270 the chain is Extracellular; that stretch reads PAYTQNR. A helical transmembrane segment spans residues 271 to 291; sequence AFALFFIVFTLIGSLFLMNLL. Topologically, residues 292–417 are cytoplasmic; the sequence is TAIIYNQFRG…TAQFIFSHHY (126 aa). The helical transmembrane segment at 418–438 threads the bilayer; the sequence is FDYLGNLVALGNLLSICVFLV. Topologically, residues 439 to 449 are extracellular; sequence LDSDLLPGERD. A helical membrane pass occupies residues 450–470; the sequence is DFVLGILDYIFILYYLLELLF. Residues 471 to 486 are Cytoplasmic-facing; sequence KVFALGLPGYLSYHSN. Residues 487–507 traverse the membrane as a helical segment; that stretch reads VFDGLLTIILLVSEICTLAVY. Residues 508–524 are Extracellular-facing; it reads RLPHSGWKPEQYGPLSL. A helical membrane pass occupies residues 525-542; the sequence is WDMTRLMNTLIVFRFLRI. Residues 543–564 lie on the Cytoplasmic side of the membrane; the sequence is IPNIKPMAEVANTILGLIPNLR. A helical membrane pass occupies residues 565 to 585; that stretch reads AFGGILVVAYYVFAMIGINLF. At 586 to 618 the chain is on the extracellular side; sequence RGVIVPPGNSSLVPDNNSAVCGSFEQLGYWPNN. Residues Asn-594 and Asn-601 are each glycosylated (N-linked (GlcNAc...) asparagine). The helical; Pore-forming intramembrane region spans 619–641; it reads FDDFAAALITLWNVMVVNNWQVI. Residues 642–656 lie on the Extracellular side of the membrane; it reads LEAYKRYAGPWSMVY. Residues 657 to 677 traverse the membrane as a helical segment; it reads FVLWWLVSSVIWINLFLALLL. At 678–731 the chain is on the cytoplasmic side; it reads ENFLHRWDPQGHKQLLVGTKQMSVELMFRDILEEPKEEELMEKLHKHPHLHLCR.

It belongs to the calcium channel alpha-1 subunit (TC 1.A.1.11) family. Two pore calcium channel subfamily. As to quaternary structure, homodimer. Interacts with LRRK2. Interacts with HAX1. Interacts with MTOR; the interaction is required for TPCN2 ATP sensitivity. Found in a complex with LSM12, TPCN1 and TPCN2. Interacts with LSM12. In terms of processing, N-glycosylated. Widely expressed. Highly expressed in macrophages. Expressed in pigmented cells.

Its subcellular location is the late endosome membrane. The protein localises to the lysosome membrane. It localises to the melanosome membrane. It carries out the reaction Ca(2+)(in) = Ca(2+)(out). The enzyme catalyses Na(+)(in) = Na(+)(out). Regulated by Mg(2+) ions, cytosolic Mg(2+) selectively inhibits outward current while lysosomal Mg(2+) modestly inhibits both the outward and inward currents. In the absence of Mg(2+), NAADP readily activates TPCN2, with properties similar to PI(3,5)P2. Na(+) current is inhibited by ATP in a MTORC-dependent manner. ATP sensitivity is independent of PI(3,5)P2. Both current elicited by PI(3,5)P2 as well as NAADP are inhibited by tetrandrine. In terms of biological role, intracellular channel initially characterized as a non-selective Ca(2+)-permeable channel activated by NAADP (nicotinic acid adenine dinucleotide phosphate), it is also a highly-selective Na(+) channel activated directly by PI(3,5)P2 (phosphatidylinositol 3,5-bisphosphate). Localizes to the lysosomal and late endosome membranes where it regulates organellar membrane excitability, membrane trafficking, and pH homeostasis. Is associated with a plethora of physiological processes, including mTOR-dependent nutrient sensing, skin pigmentation and autophagy. Ion selectivity is not fixed but rather agonist-dependent and under defined ionic conditions, can be readily activated by both NAADP and PI(3,5)P2. As calcium channel, it increases the pH in the lysosomal lumen, as sodium channel, it promotes lysosomal exocytosis. Plays a crucial role in endolysosomal trafficking in the endolysosomal degradation pathway and is potentially involved in the homeostatic control of many macromolecules and cell metabolites. Also expressed in melanosomes of pigmented cells where mediates a Ca(2+) channel and/or PI(3,5)P2-activated melanosomal Na(+) channel to acidify pH and inhibit tyrosinase activity required for melanogenesis and pigmentation. Unlike the voltage-dependent TPCN1, TPCN2 is voltage independent and can be activated solely by PI(3,5)P2 binding. In contrast, PI(4,5)P2, PI(3,4)P2, PI(3)P and PI(5)P have no obvious effect on channel activation. Functionally, (Microbial infection) During Ebola virus (EBOV) infection, controls the movement of endosomes containing virus particles and is required by EBOV to escape from the endosomal network into the cell cytoplasm. This chain is Two pore channel protein 2, found in Mus musculus (Mouse).